Reading from the N-terminus, the 848-residue chain is Beta-galactosidase 13 (848 aa).

The first 27 residues, 1–27 (MKIHSSDHSWLLLAVLVILLSFSGALS), serve as a signal peptide directing secretion. Asn-107 carries N-linked (GlcNAc...) asparagine glycosylation. Glu-200 functions as the Proton donor in the catalytic mechanism. The Nucleophile role is filled by Glu-271. Residues Asn-272, Asn-303, Asn-376, Asn-398, Asn-782, Asn-787, and Asn-817 are each glycosylated (N-linked (GlcNAc...) asparagine). An SUEL-type lectin domain is found at 754 to 843 (DDVHLTANLK…KKLAVQVKCG (90 aa)).

It belongs to the glycosyl hydrolase 35 family. In terms of tissue distribution, ubiquitous, with higher expression levels in roots, flowers and siliques.

It is found in the secreted. The protein resides in the extracellular space. It localises to the apoplast. The catalysed reaction is Hydrolysis of terminal non-reducing beta-D-galactose residues in beta-D-galactosides.. The protein is Beta-galactosidase 13 (BGAL13) of Arabidopsis thaliana (Mouse-ear cress).